We begin with the raw amino-acid sequence, 100 residues long: Urease subunit gamma (100 aa).

This sequence belongs to the urease gamma subunit family. As to quaternary structure, heterotrimer of UreA (gamma), UreB (beta) and UreC (alpha) subunits. Three heterotrimers associate to form the active enzyme.

The protein resides in the cytoplasm. The catalysed reaction is urea + 2 H2O + H(+) = hydrogencarbonate + 2 NH4(+). It functions in the pathway nitrogen metabolism; urea degradation; CO(2) and NH(3) from urea (urease route): step 1/1. In Cupriavidus metallidurans (strain ATCC 43123 / DSM 2839 / NBRC 102507 / CH34) (Ralstonia metallidurans), this protein is Urease subunit gamma.